The following is a 262-amino-acid chain: MLTLYSETFPSRLLLGTAAYPTPEILKQSVRTARPAMITVSLRRAGCGGEAHGQGFWSLLQETGVPVLPNTAGCQSVQEAVTTAQMAREVFETDWIKLELIGDDDTLQPDVFQLVEAAEILIKDGFKVLPYCTEDLIACRRLLDVGCQALMPWAAPIGTGLGAVHAYALNVLRERLPYTPLIIDAGLGLPSQAAQVMEWGFDGVLLNTAVSRSGDPVNMARAFALAVESGRLAFEAGPVEARDKAQASTPTVGQPFWHSAEY.

The active-site Schiff-base intermediate with DXP is the Lys97. Residues Gly158, 185–186, and 207–208 each bind 1-deoxy-D-xylulose 5-phosphate; these read AG and NT. Residues 243–262 are disordered; it reads DKAQASTPTVGQPFWHSAEY.

It belongs to the ThiG family. Homotetramer. Forms heterodimers with either ThiH or ThiS.

The protein resides in the cytoplasm. It catalyses the reaction [ThiS sulfur-carrier protein]-C-terminal-Gly-aminoethanethioate + 2-iminoacetate + 1-deoxy-D-xylulose 5-phosphate = [ThiS sulfur-carrier protein]-C-terminal Gly-Gly + 2-[(2R,5Z)-2-carboxy-4-methylthiazol-5(2H)-ylidene]ethyl phosphate + 2 H2O + H(+). It participates in cofactor biosynthesis; thiamine diphosphate biosynthesis. Its function is as follows. Catalyzes the rearrangement of 1-deoxy-D-xylulose 5-phosphate (DXP) to produce the thiazole phosphate moiety of thiamine. Sulfur is provided by the thiocarboxylate moiety of the carrier protein ThiS. In vitro, sulfur can be provided by H(2)S. This is Thiazole synthase from Neisseria meningitidis serogroup C (strain 053442).